A 151-amino-acid chain; its full sequence is MKKIDVKILDRRICDRFPLPAYATTGSAGLDLRACIDEPMVLAPGETTLIPTGLAIHIADANLAAVILPRSGLGHKHGIVLGNLVGLIDSDYQGPLMVSVWNRGQDIFTIEPGERMAQMVFVPVVQAEFNLVESFDTSERGEGGFGHSGRQ.

Substrate is bound by residues Arg-70–Gly-72, Asn-83, Leu-87–Asp-89, and Met-97.

Belongs to the dUTPase family. Mg(2+) is required as a cofactor.

It carries out the reaction dUTP + H2O = dUMP + diphosphate + H(+). The protein operates within pyrimidine metabolism; dUMP biosynthesis; dUMP from dCTP (dUTP route): step 2/2. Its function is as follows. This enzyme is involved in nucleotide metabolism: it produces dUMP, the immediate precursor of thymidine nucleotides and it decreases the intracellular concentration of dUTP so that uracil cannot be incorporated into DNA. The polypeptide is Deoxyuridine 5'-triphosphate nucleotidohydrolase (Sodalis glossinidius (strain morsitans)).